Here is a 97-residue protein sequence, read N- to C-terminus: Co-chaperonin GroES (97 aa).

The protein belongs to the GroES chaperonin family. As to quaternary structure, heptamer of 7 subunits arranged in a ring. Interacts with the chaperonin GroEL.

Its subcellular location is the cytoplasm. In terms of biological role, together with the chaperonin GroEL, plays an essential role in assisting protein folding. The GroEL-GroES system forms a nano-cage that allows encapsulation of the non-native substrate proteins and provides a physical environment optimized to promote and accelerate protein folding. GroES binds to the apical surface of the GroEL ring, thereby capping the opening of the GroEL channel. This Pseudomonas fluorescens (strain Pf0-1) protein is Co-chaperonin GroES.